We begin with the raw amino-acid sequence, 451 residues long: D-aminoacyl-tRNA deacylase (451 aa).

The segment at 410-437 (RTADIPEGPKFGKLASGESVEIDGEEID) is disordered.

The protein belongs to the DtdA deacylase family. In terms of assembly, monomer. The cofactor is Zn(2+).

It carries out the reaction a D-aminoacyl-tRNA + H2O = a tRNA + a D-alpha-amino acid + H(+). The catalysed reaction is glycyl-tRNA(Ala) + H2O = tRNA(Ala) + glycine + H(+). D-aminoacyl-tRNA deacylase with broad substrate specificity. By recycling D-aminoacyl-tRNA to D-amino acids and free tRNA molecules, this enzyme counteracts the toxicity associated with the formation of D-aminoacyl-tRNA entities in vivo. This is D-aminoacyl-tRNA deacylase from Haloarcula marismortui (strain ATCC 43049 / DSM 3752 / JCM 8966 / VKM B-1809) (Halobacterium marismortui).